Here is a 590-residue protein sequence, read N- to C-terminus: Methionine--tRNA ligase, mitochondrial (590 aa).

The N-terminal 26 residues, Met1–Ala26, are a transit peptide targeting the mitochondrion. The 'HIGH' region signature appears at Phe51–His61. The 'KMSKS' region signature appears at Lys342–Ser346. Lys345 is an ATP binding site. The disordered stretch occupies residues Leu570–Lys590. Over residues Glu571–Lys590 the composition is skewed to basic and acidic residues.

This sequence belongs to the class-I aminoacyl-tRNA synthetase family.

The protein localises to the mitochondrion matrix. It catalyses the reaction tRNA(Met) + L-methionine + ATP = L-methionyl-tRNA(Met) + AMP + diphosphate. The sequence is that of Methionine--tRNA ligase, mitochondrial (mars2) from Takifugu rubripes (Japanese pufferfish).